Here is a 53-residue protein sequence, read N- to C-terminus: UPF0391 membrane protein PC1_0455 (53 aa).

2 consecutive transmembrane segments (helical) span residues 4 to 24 (WGIIFLVIALIAAALGFGGLA) and 30 to 47 (AAKIVFVVGIILFLLSLF).

This sequence belongs to the UPF0391 family.

Its subcellular location is the cell membrane. This chain is UPF0391 membrane protein PC1_0455, found in Pectobacterium carotovorum subsp. carotovorum (strain PC1).